A 967-amino-acid chain; its full sequence is MYSNNRVEVFHGDGRLGELEIYPSRELNQQQDDVMKQRKKKQREVMELAKMGIRISHFSQSGERCPPLAILTTISSCGLCFKLEASPSPAQESLSLFYSSCLRDNKTAVMLLGGEELHLVAMYSENIKNDRPCFWAFSVAPGIYDSCLVMLNLRCLGIVFDLDETLVVANTMRSFEDKIDGFQRRINNEMDPQRLAVIVAEMKRYQDDKNLLKQYIESDQVVENGEVIKVQSEIVPALSDNHQPLVRPLIRLQEKNIILTRINPMIRDTSVLVRMRPSWEELRSYLTAKGRKRFEVYVCTMAERDYALEMWRLLDPEGNLINTNDLLARIVCVKSGFKKSLFNVFLDGTCHPKMALVIDDRLKVWDEKDQPRVHVVPAFAPYYSPQAEAAATPVLCVARNVACGVRGGFFRDFDDSLLPRIAEISYENDAEDIPSPPDVSHYLVSEDDTSGLNGNKDPLSFDGMADTEVERRLKEAISASSAVLPAANIDPRIAAPVQFPMASASSVSVPVPVQVVQQAIQPSAMAFPSIPFQQPQQPTSIAKHLVPSEPSLQSSPAREEGEVPESELDPDTRRRLLILQHGQDTRDPAPSEPSFPQRPPVQAPPSHVQSRNGWFPVEEEMDPAQIRRAVSKEYPLDSEMIHMEKHRPRHPSFFSKIDNSTQSDRMLHENRRPPKESLRRDEQLRSNNNLPDSHPFYGEDASWNQSSSRNSDLDFLPERSVSATETSADVLHGIAIKCGAKVEYKPSLVSSTDLRFSVEAWLSNQKIGEGIGKSRREALHKAAEASIQNLADGYMRANGDPGPSHRDATPFTNENISMGNANALNNQPFARDETALPVSSRPTDPRLEGSMRHTGSITALRELCASEGLEMAFQSQRQLPSDMVHRDELHAQVEIDGRVVGEGVGSTWDEARMQAAERALSSVRSMLGQPLHKRQGSPRSFGGMSNKRLKPDFQRSLQRMPSSGRYS.

Residues 38–41 (RKKK) carry the Nuclear localization signal (NLS) motif. The FCP1 homology domain maps to 151–401 (LNLRCLGIVF…TPVLCVARNV (251 aa)). Disordered regions lie at residues 548 to 611 (SEPS…VQSR) and 643 to 712 (MEKH…RNSD). Residues 590–603 (PSEPSFPQRPPVQA) are compositionally biased toward pro residues. Positions 665 to 684 (RMLHENRRPPKESLRRDEQL) are enriched in basic and acidic residues. DRBM domains are found at residues 724–792 (TETS…NLAD) and 855–925 (GSIT…SVRS). A disordered region spans residues 928 to 967 (GQPLHKRQGSPRSFGGMSNKRLKPDFQRSLQRMPSSGRYS). Positions 945 to 967 (SNKRLKPDFQRSLQRMPSSGRYS) are required for nuclear localization (NLS). The Nuclear localization signal (NLS) motif lies at 947–951 (KRLKP). Positions 955-967 (RSLQRMPSSGRYS) are enriched in polar residues.

As to quaternary structure, interacts with FREE1, ANAC019, MYB3, MYB4 and MYB32. Binds to DMS3. Interacts with RCF3. Interacts with RS40 and RS41. Interacts with EIF4A3. Interacts with UPF3. Mg(2+) is required as a cofactor. It depends on Co(2+) as a cofactor. Requires Mn(2+) as cofactor. As to expression, expressed at very low levels in roots, leaves, stems, flowers and siliques.

The protein localises to the nucleus. Its subcellular location is the nucleus speckle. The catalysed reaction is O-phospho-L-seryl-[protein] + H2O = L-seryl-[protein] + phosphate. The enzyme catalyses O-phospho-L-threonyl-[protein] + H2O = L-threonyl-[protein] + phosphate. Its function is as follows. Processively dephosphorylates 'Ser-5' but not 'Ser-2' of the heptad repeats YSPTSPS in the C-terminal domain of the largest RNA polymerase II subunit (RPB1). This promotes the activity of RNA polymerase II. Together with CPL2, required for male gametes fertility. Multifunctional regulator that modulates plant growth, stress, and phytohormones responses. Negative regulator of stress gene transcription involved in abscisic acid (ABA) mediated and jasmonic acid (JA) mediated signaling pathways, NaCl, osmotic stress, wounding, and cold resistance. Negatively regulates the expression of jasmonic acid (JA) biosynthetic genes in response to wounding. Forms a complex with RCF3 that modulates co-transcriptional processes such as mRNA capping and polyadenylation, and functions to repress stress-inducible gene expression. Dephosphorylates RCF3. Involved in the dephosphorylation of EIF4A3. This dephosphorylation retains EIF4A3 in the nucleus and limits its accumulation in the cytoplasm. Is essential for the degradation of the nonsense-mediated mRNA decay (NMD) transcripts. The chain is RNA polymerase II C-terminal domain phosphatase-like 1 from Arabidopsis thaliana (Mouse-ear cress).